The following is a 210-amino-acid chain: Rho-related GTP-binding protein RhoD (210 aa).

24–31 contacts GTP; the sequence is GDGGCGKT. The short motif at 46-54 is the Effector region element; it reads YTPTVFERY. GTP-binding positions include 71–75 and 129–132; these read DTAGQ and CKTD. The residue at position 207 (cysteine 207) is a Cysteine methyl ester. A lipid anchor (S-geranylgeranyl cysteine) is attached at cysteine 207. A propeptide spans 208–210 (removed in mature form); the sequence is VVT.

It belongs to the small GTPase superfamily. Rho family. As to quaternary structure, interacts (in GTP-bound form) with DIAPH2 isoform 3, DAPK3, FILIP1 and WHAMM. Interacts with PAK5. Interacts (independent of GTP-loaded status) with ANKFY1. In terms of tissue distribution, heart, placenta, liver, skeletal muscle, and pancreas and, with weaker intensity, in several other tissues.

It localises to the cell membrane. The protein localises to the early endosome. In terms of biological role, involved in endosome dynamics. May coordinate membrane transport with the function of the cytoskeleton. Involved in the internalization and trafficking of activated tyrosine kinase receptors such as PDGFRB. Participates in the reorganization of actin cytoskeleton; the function seems to involve WHAMM and includes regulation of filopodia formation and actin filament bundling. Can modulate the effect of DAPK3 in reorganization of actin cytoskeleton and focal adhesion dissolution. This Homo sapiens (Human) protein is Rho-related GTP-binding protein RhoD.